The primary structure comprises 237 residues: Ribosomal RNA small subunit methyltransferase G (237 aa).

S-adenosyl-L-methionine-binding positions include Gly78, Phe83, 129-130, and Arg148; that span reads AE.

It belongs to the methyltransferase superfamily. RNA methyltransferase RsmG family.

Its subcellular location is the cytoplasm. Functionally, specifically methylates the N7 position of a guanine in 16S rRNA. The chain is Ribosomal RNA small subunit methyltransferase G from Streptococcus pyogenes serotype M3 (strain ATCC BAA-595 / MGAS315).